The following is a 467-amino-acid chain: Asparagine--tRNA ligase (467 aa).

It belongs to the class-II aminoacyl-tRNA synthetase family. In terms of assembly, homodimer.

It localises to the cytoplasm. It catalyses the reaction tRNA(Asn) + L-asparagine + ATP = L-asparaginyl-tRNA(Asn) + AMP + diphosphate + H(+). The chain is Asparagine--tRNA ligase from Bacteroides fragilis (strain YCH46).